The chain runs to 929 residues: Protein translocase subunit SecA (929 aa).

ATP-binding positions include Q87, 105-109 (GEGKT), and D512. The Zn(2+) site is built by C914, C916, C925, and H926.

Belongs to the SecA family. In terms of assembly, monomer and homodimer. Part of the essential Sec protein translocation apparatus which comprises SecA, SecYEG and auxiliary proteins SecDF-YajC and YidC. Requires Zn(2+) as cofactor.

The protein resides in the cell inner membrane. It is found in the cytoplasm. It catalyses the reaction ATP + H2O + cellular proteinSide 1 = ADP + phosphate + cellular proteinSide 2.. Its function is as follows. Part of the Sec protein translocase complex. Interacts with the SecYEG preprotein conducting channel. Has a central role in coupling the hydrolysis of ATP to the transfer of proteins into and across the cell membrane, serving both as a receptor for the preprotein-SecB complex and as an ATP-driven molecular motor driving the stepwise translocation of polypeptide chains across the membrane. The chain is Protein translocase subunit SecA from Psychrobacter arcticus (strain DSM 17307 / VKM B-2377 / 273-4).